We begin with the raw amino-acid sequence, 552 residues long: Terpene synthase 5 (552 aa).

Residues D307, D311, and E457 each contribute to the Mg(2+) site. The DDXXD motif motif lies at 307–311 (DDTYD).

It belongs to the terpene synthase family. Requires Mg(2+) as cofactor.

In terms of biological role, catalyzes the cyclization of farnesyl diphosphate to multiple sesquiterpenes, such as olefins and sesquiterpene alcohols. This Ricinus communis (Castor bean) protein is Terpene synthase 5 (TPS5).